The following is a 406-amino-acid chain: Vacuole membrane protein 1 (406 aa).

Residue Ala-2 is modified to N-acetylalanine. Topologically, residues 2–43 (AENGQNCDQRRVAMNKEQYNGNFTDPSSVNEKKRRDREERQN) are cytoplasmic. A helical transmembrane segment spans residues 44–63 (IVLWRQPLITLQYFSLETLV). The Extracellular portion of the chain corresponds to 64–77 (ILKEWTSKLWHRQS). The helical transmembrane segment at 78 to 98 (IVVSFLLLLAVLTATYYVEGA) threads the bilayer. Over 99 to 109 (HQQYVQRIEKQ) the chain is Cytoplasmic. The helical transmembrane segment at 110 to 130 (FLLYAYWIGLGILSSVGLGTG) threads the bilayer. Residues 131 to 250 (LHTFLLYLGP…ASRAKLAVQN (120 aa)) are Extracellular-facing. Residues 173 to 316 (GTEGTISLWS…FVIVAFSKHI (144 aa)) are VTT domain. The helical transmembrane segment at 251 to 271 (LVQKVGFFGILACASIPNPLF) threads the bilayer. The Cytoplasmic portion of the chain corresponds to 272-273 (DL). The chain crosses the membrane as a helical span at residues 274–294 (AGITCGHFLVPFWTFFGATLI). Topologically, residues 295-306 (GKAIIKMHIQKL) are extracellular. Residues 307-327 (FVIVAFSKHIVEQMVAFIGAV) form a helical membrane-spanning segment. At 328 to 363 (PGIGPSLQKPFQEYLEAQRQKLHHRSEMGTPQGENW) the chain is on the cytoplasmic side. The helical transmembrane segment at 364–384 (LSWMFEKLVVVMVCYFILSII) threads the bilayer. Topologically, residues 385–406 (NSMAQSYAKRIQQRLDPKEKTK) are extracellular.

Belongs to the VMP1 family. In terms of assembly, interacts with BECN1. Interacts with TJP1. Interacts with TP53INP2. Interacts with TMEM41B. Interacts with ATP2A2, PLN and SLN; competes with PLN and SLN to prevent them from forming an inhibitory complex with ATP2A2. Interacts with ATG2A.

The protein localises to the endoplasmic reticulum-Golgi intermediate compartment membrane. The protein resides in the cell membrane. It localises to the vacuole membrane. Its subcellular location is the endoplasmic reticulum membrane. It catalyses the reaction a 1,2-diacyl-sn-glycero-3-phospho-L-serine(in) = a 1,2-diacyl-sn-glycero-3-phospho-L-serine(out). It carries out the reaction cholesterol(in) = cholesterol(out). The catalysed reaction is a 1,2-diacyl-sn-glycero-3-phosphocholine(in) = a 1,2-diacyl-sn-glycero-3-phosphocholine(out). The enzyme catalyses a 1,2-diacyl-sn-glycero-3-phosphoethanolamine(in) = a 1,2-diacyl-sn-glycero-3-phosphoethanolamine(out). Phospholipid scramblase involved in lipid homeostasis and membrane dynamics processes. Has phospholipid scramblase activity toward cholesterol and phosphatidylserine, as well as phosphatidylethanolamine and phosphatidylcholine. Required for autophagosome formation: participates in early stages of autophagosome biogenesis at the endoplasmic reticulum (ER) membrane by reequilibrating the leaflets of the ER as lipids are extracted by ATG2 (ATG2A or ATG2B) to mediate autophagosome assembly. Regulates ATP2A2 activity to control ER-isolation membrane contacts for autophagosome formation. In addition to autophagy, involved in other processes in which phospholipid scramblase activity is required. Modulates ER contacts with lipid droplets, mitochondria and endosomes. Plays an essential role in formation of cell junctions. Upon stress such as bacterial and viral infection, promotes formation of cytoplasmic vacuoles followed by cell death. Involved in the cytoplasmic vacuolization of acinar cells during the early stage of acute pancreatitis. The protein is Vacuole membrane protein 1 of Bos taurus (Bovine).